The following is a 381-amino-acid chain: Dual specificity protein phosphatase 6 (381 aa).

Positions 30–148 constitute a Rhodanese domain; it reads GNEQLLLMDC…FQAEFALHCE (119 aa). The disordered stretch occupies residues 176-203; it reads SSSDIESDLDRDPNSATDSDGSPLSNSQ. Positions 189–203 are enriched in polar residues; that stretch reads NSATDSDGSPLSNSQ. In terms of domain architecture, Tyrosine-protein phosphatase spans 206 to 349; sequence FPVEILPFLY…LLDFERTLGL (144 aa). Cys-293 serves as the catalytic Phosphocysteine intermediate.

The protein belongs to the protein-tyrosine phosphatase family. Non-receptor class dual specificity subfamily. Interacts with MAPK1/ERK2. Post-translationally, ubiquitinated by the SCF(FBXO31) complex, leading to its proteasomal degradation. Expressed in lung, heart, brain, and kidney, but not significantly in skeletal muscle or testis.

Its subcellular location is the cytoplasm. It carries out the reaction O-phospho-L-tyrosyl-[protein] + H2O = L-tyrosyl-[protein] + phosphate. The enzyme catalyses O-phospho-L-seryl-[protein] + H2O = L-seryl-[protein] + phosphate. It catalyses the reaction O-phospho-L-threonyl-[protein] + H2O = L-threonyl-[protein] + phosphate. Functionally, dual specificity protein phosphatase, which mediates dephosphorylation and inactivation of MAP kinases. Has a specificity for the ERK family. Implicated in muscle and neuronal differentiation. Plays an important role in alleviating chronic postoperative pain. Necessary for the normal dephosphorylation of the long-lasting phosphorylated forms of spinal MAPK1/3 and MAP kinase p38 induced by peripheral surgery, which drives the resolution of acute postoperative allodynia. Also important for dephosphorylation of MAPK1/3 in local wound tissue, which further contributes to resolution of acute pain. The chain is Dual specificity protein phosphatase 6 (Dusp6) from Rattus norvegicus (Rat).